A 225-amino-acid chain; its full sequence is MAITDWPENERPREKLLTRGTAALSDAELLALFLRVGMRGKSAVDLARDLLQQFGSLTRLCAASAAEFSAIPGMGLAKYAQLQAVMELARRALAEQMNDADVFESPLAVRNWLRLRIGSLPHEVFHVLLLDARNRLIEAVELFRGTLTQTSVYPREVVKLALARNAAAVILAHNHPSGAAEPSPADELLTRSLKQALELVDIRVLDHFIVTAHAQPLSFAERGLL.

The MPN domain occupies 102 to 225; the sequence is VFESPLAVRN…PLSFAERGLL (124 aa). 3 residues coordinate Zn(2+): His-173, His-175, and Asp-186. The JAMM motif motif lies at 173–186; the sequence is HNHPSGAAEPSPAD.

The protein belongs to the UPF0758 family.

The sequence is that of UPF0758 protein AZOSEA04420 from Aromatoleum aromaticum (strain DSM 19018 / LMG 30748 / EbN1) (Azoarcus sp. (strain EbN1)).